Here is a 364-residue protein sequence, read N- to C-terminus: DNA polymerase IV (364 aa).

The region spanning 6–194 (VFHIDFDYFY…LKIRDIPGIG (189 aa)) is the UmuC domain. Mg(2+)-binding residues include D10 and D111. E112 is a catalytic residue.

It belongs to the DNA polymerase type-Y family. As to quaternary structure, monomer. Requires Mg(2+) as cofactor.

It is found in the cytoplasm. The catalysed reaction is DNA(n) + a 2'-deoxyribonucleoside 5'-triphosphate = DNA(n+1) + diphosphate. Functionally, poorly processive, error-prone DNA polymerase involved in untargeted mutagenesis. Copies undamaged DNA at stalled replication forks, which arise in vivo from mismatched or misaligned primer ends. These misaligned primers can be extended by PolIV. Exhibits no 3'-5' exonuclease (proofreading) activity. May be involved in translesional synthesis. The protein is DNA polymerase IV of Nitrosopumilus maritimus (strain SCM1).